Consider the following 100-residue polypeptide: Aspartyl/glutamyl-tRNA(Asn/Gln) amidotransferase subunit C (100 aa).

It belongs to the GatC family. As to quaternary structure, heterotrimer of A, B and C subunits.

The catalysed reaction is L-glutamyl-tRNA(Gln) + L-glutamine + ATP + H2O = L-glutaminyl-tRNA(Gln) + L-glutamate + ADP + phosphate + H(+). It carries out the reaction L-aspartyl-tRNA(Asn) + L-glutamine + ATP + H2O = L-asparaginyl-tRNA(Asn) + L-glutamate + ADP + phosphate + 2 H(+). Allows the formation of correctly charged Asn-tRNA(Asn) or Gln-tRNA(Gln) through the transamidation of misacylated Asp-tRNA(Asn) or Glu-tRNA(Gln) in organisms which lack either or both of asparaginyl-tRNA or glutaminyl-tRNA synthetases. The reaction takes place in the presence of glutamine and ATP through an activated phospho-Asp-tRNA(Asn) or phospho-Glu-tRNA(Gln). This chain is Aspartyl/glutamyl-tRNA(Asn/Gln) amidotransferase subunit C, found in Streptococcus pyogenes serotype M18 (strain MGAS8232).